A 320-amino-acid polypeptide reads, in one-letter code: Malate dehydrogenase (320 aa).

Residues 10-15 and Asp34 each bind NAD(+); that span reads GAGQIG. Substrate-binding residues include Arg83 and Arg89. Residues Asn96 and 119-121 contribute to the NAD(+) site; that span reads ITN. Substrate-binding residues include Asn121 and Arg152. His176 functions as the Proton acceptor in the catalytic mechanism.

This sequence belongs to the LDH/MDH superfamily. MDH type 3 family.

It carries out the reaction (S)-malate + NAD(+) = oxaloacetate + NADH + H(+). Catalyzes the reversible oxidation of malate to oxaloacetate. In Methylorubrum populi (strain ATCC BAA-705 / NCIMB 13946 / BJ001) (Methylobacterium populi), this protein is Malate dehydrogenase.